The chain runs to 320 residues: Eukaryotic translation initiation factor 3 subunit G (320 aa).

Residues 1–59 (MPTGDFDSKPSWADQVEEEGEDDKCVTSELLKGIPLATGDTSPEPELLPGAPLPPPKEV) are disordered. Phosphoserine is present on residues serine 8 and serine 11. Threonine 38 and threonine 41 each carry phosphothreonine. Residues serine 42, serine 189, serine 223, and serine 264 each carry the phosphoserine modification. Residues 209 to 234 (KTGKYVPPSLRDGASRRGESMQPNRR) form a disordered region. Residues 221-234 (GASRRGESMQPNRR) show a composition bias toward basic and acidic residues. Positions 239–317 (ATIRVTNLSE…LILNVEWAKP (79 aa)) constitute an RRM domain.

Component of the eukaryotic translation initiation factor 3 (eIF-3) complex, which is composed of 13 subunits: EIF3A, EIF3B, EIF3C, EIF3D, EIF3E, EIF3F, EIF3G, EIF3H, EIF3I, EIF3J, EIF3K, EIF3L and EIF3M. The eIF-3 complex appears to include 3 stable modules: module A is composed of EIF3A, EIF3B, EIF3G and EIF3I; module B is composed of EIF3F, EIF3H, and EIF3M; and module C is composed of EIF3C, EIF3D, EIF3E, EIF3K and EIF3L. EIF3C of module C binds EIF3B of module A and EIF3H of module B, thereby linking the three modules. EIF3J is a labile subunit that binds to the eIF-3 complex via EIF3B. The eIF-3 complex interacts with RPS6KB1 under conditions of nutrient depletion. Mitogenic stimulation leads to binding and activation of a complex composed of MTOR and RPTOR, leading to phosphorylation and release of RPS6KB1 and binding of EIF4B to eIF-3. Interacts (via C-terminus) with AIFM1 (via N-terminus). Interacts with DHX33; the interaction is independent of RNA. Phosphorylated. Phosphorylation is enhanced upon serum stimulation.

It localises to the cytoplasm. It is found in the nucleus. The protein localises to the perinuclear region. RNA-binding component of the eukaryotic translation initiation factor 3 (eIF-3) complex, which is required for several steps in the initiation of protein synthesis. The eIF-3 complex associates with the 40S ribosome and facilitates the recruitment of eIF-1, eIF-1A, eIF-2:GTP:methionyl-tRNAi and eIF-5 to form the 43S pre-initiation complex (43S PIC). The eIF-3 complex stimulates mRNA recruitment to the 43S PIC and scanning of the mRNA for AUG recognition. The eIF-3 complex is also required for disassembly and recycling of post-termination ribosomal complexes and subsequently prevents premature joining of the 40S and 60S ribosomal subunits prior to initiation. The eIF-3 complex specifically targets and initiates translation of a subset of mRNAs involved in cell proliferation, including cell cycling, differentiation and apoptosis, and uses different modes of RNA stem-loop binding to exert either translational activation or repression. This subunit can bind 18S rRNA. Functionally, (Microbial infection) In case of FCV infection, plays a role in the ribosomal termination-reinitiation event leading to the translation of VP2. This chain is Eukaryotic translation initiation factor 3 subunit G, found in Homo sapiens (Human).